Here is a 1306-residue protein sequence, read N- to C-terminus: Clustered mitochondria protein homolog (1306 aa).

Low complexity predominate over residues Met1–Ala11. The tract at residues Met1–Gly47 is disordered. Residues Ser12–Thr33 are compositionally biased toward polar residues. Positions Asp336–Met580 constitute a Clu domain. Disordered stretches follow at residues Glu630–Ile689 and Lys912–Ala956. Residues Glu656 to Ile689 are compositionally biased toward basic and acidic residues. TPR repeat units lie at residues Ala1032–Thr1065, Leu1074–Val1107, and Ile1116–Val1149. The tract at residues Phe1275–Lys1306 is disordered. The span at Asn1285–Gly1298 shows a compositional bias: basic residues.

This sequence belongs to the CLU family. As to quaternary structure, may associate with the eukaryotic translation initiation factor 3 (eIF-3) complex.

It localises to the cytoplasm. MRNA-binding protein involved in proper cytoplasmic distribution of mitochondria. The sequence is that of Clustered mitochondria protein homolog from Botryotinia fuckeliana (strain B05.10) (Noble rot fungus).